The following is a 79-amino-acid chain: Short neurotoxin 3 (79 aa).

An N-terminal signal peptide occupies residues 1-21 (MKTLLLTLVMVTIMCLDLGYT). Intrachain disulfides connect Cys-24-Cys-41, Cys-34-Cys-59, Cys-63-Cys-71, and Cys-72-Cys-77.

Belongs to the three-finger toxin family. Short-chain subfamily. Type III alpha-neurotoxin sub-subfamily. In terms of tissue distribution, expressed by the venom gland.

It is found in the secreted. Functionally, binds with high affinity to muscle nicotinic acetylcholine receptor (nAChR) and hinders acetylcholine binding to the receptor, thereby impairing neuromuscular transmission. Competes with the binding of alpha-bungarotoxin on muscle AChR (from Torpedo) with an IC(50) of 0.30 uM. Causes muscle paralysis, spasms and increased respiration. The sequence is that of Short neurotoxin 3 from Pseudonaja textilis (Eastern brown snake).